We begin with the raw amino-acid sequence, 201 residues long: Small ribosomal subunit protein uS4c (201 aa).

Positions 89 to 152 constitute an S4 RNA-binding domain; that stretch reads MRLDNILFRL…NSRTLVQNLL (64 aa).

Belongs to the universal ribosomal protein uS4 family. Part of the 30S ribosomal subunit. Contacts protein S5. The interaction surface between S4 and S5 is involved in control of translational fidelity.

It is found in the plastid. It localises to the chloroplast. One of the primary rRNA binding proteins, it binds directly to 16S rRNA where it nucleates assembly of the body of the 30S subunit. Functionally, with S5 and S12 plays an important role in translational accuracy. In Capsella bursa-pastoris (Shepherd's purse), this protein is Small ribosomal subunit protein uS4c (rps4).